A 253-amino-acid chain; its full sequence is Chemokine-binding protein (253 aa).

The signal sequence occupies residues 1 to 17 (MKQYIVLACMCLAAAAM). The tract at residues 62–87 (TEITESESDPEVESEDDSTSVEDVDP) is disordered. Acidic residues predominate over residues 65-86 (TESESDPEVESEDDSTSVEDVD).

It belongs to the orthopoxvirus OPG001 family. In terms of assembly, binds to host CC chemokines, such as RANTES/CCL5, MIP-1alpha/CCL3, MCP-1/CCL2 and eotaxin.

It localises to the secreted. In terms of biological role, inhibits host immune defense by binding to host chemokines. Binds host CC chemokines (beta chemokines) such as RANTES with high affinity, but not CXC or C chemokines (alpha and gamma chemokines). The sequence is that of Chemokine-binding protein (OPG001) from Variola virus (isolate Human/India/Ind3/1967) (VARV).